We begin with the raw amino-acid sequence, 573 residues long: O-fucosyltransferase 20 (573 aa).

Residues Met-1–Arg-60 lie on the Cytoplasmic side of the membrane. The helical; Signal-anchor for type II membrane protein transmembrane segment at Ile-61 to Val-81 threads the bilayer. At Asp-82 to Ala-573 the chain is on the lumenal side. N-linked (GlcNAc...) asparagine glycosylation occurs at Asn-138. His-344–Arg-346 contacts substrate. Residues Asn-385 and Asn-517 are each glycosylated (N-linked (GlcNAc...) asparagine). The segment covering Ala-547 to Val-556 has biased composition (basic and acidic residues). A disordered region spans residues Ala-547–Ala-573. A compositionally biased stretch (polar residues) spans Asp-563 to Ala-573.

Belongs to the glycosyltransferase GT106 family. In terms of assembly, interacts with RACK1A. Highly expressed in shoot apical meristem (SAM) and in young vegetative tissues.

Its subcellular location is the golgi apparatus membrane. The protein operates within glycan metabolism. Its function is as follows. May play a role in the biosynthesis of matrix polysaccharides and contribute to the biomechanics and development of the plant cell wall. The sequence is that of O-fucosyltransferase 20 from Arabidopsis thaliana (Mouse-ear cress).